The chain runs to 1102 residues: Probable leucine-rich repeat receptor-like protein kinase At5g63930 (1102 aa).

The signal sequence occupies residues 1-26 (MVKEMMKLAVFFISLLLILLISETTG). Over 27–737 (LNLEGQYLLE…GKPGGMRSSK (711 aa)) the chain is Extracellular. Residues asparagine 54, asparagine 68, asparagine 79, and asparagine 119 are each glycosylated (N-linked (GlcNAc...) asparagine). 26 LRR repeats span residues 72 to 96 (DPEV…IGGL), 97 to 120 (VHLK…IGNC), 122 to 144 (SLEI…IGKL), 145 to 170 (VSLE…NLLS), 172 to 192 (SQLV…IGNL), 193 to 216 (KRLT…IGGC), 217 to 241 (ESLV…GMLK), 243 to 264 (LSQV…ISNC), 265 to 288 (TSLE…LGDL), 289 to 312 (QSLE…IGNL), 314 to 336 (YAIE…LGNI), 337 to 360 (EGLE…LSTL), 361 to 383 (KNLS…GFQY), 385 to 408 (RGLF…LGWY), 409 to 432 (SDLW…LCLH), 433 to 456 (SNMI…ITTC), 458 to 480 (TLVQ…LCKQ), 481 to 504 (VNVT…VGNC), 505 to 528 (SALQ…IGML), 529 to 552 (SQLG…IFNC), 554 to 576 (MLQR…VGSL), 577 to 602 (YQLE…NLSR), 604 to 624 (TELQ…LGSL), 625 to 649 (TGLQ…LSNL), 651 to 672 (MLEF…SFAN), and 674 to 700 (SSLL…SMSS). Asparagine 180 carries an N-linked (GlcNAc...) asparagine glycan. N-linked (GlcNAc...) asparagine glycosylation occurs at asparagine 263. N-linked (GlcNAc...) asparagine glycosylation is found at asparagine 302 and asparagine 311. Asparagine 362 carries an N-linked (GlcNAc...) asparagine glycan. Asparagine 444 carries N-linked (GlcNAc...) asparagine glycosylation. 2 N-linked (GlcNAc...) asparagine glycosylation sites follow: asparagine 482 and asparagine 503. Residues asparagine 535, asparagine 564, asparagine 588, asparagine 599, asparagine 614, asparagine 632, asparagine 661, asparagine 672, asparagine 680, and asparagine 695 are each glycosylated (N-linked (GlcNAc...) asparagine). The chain crosses the membrane as a helical span at residues 738–758 (IIAITAAVIGGVSLMLIALIV). Topologically, residues 759–1102 (YLMRRPVRTV…TEELTQTTTP (344 aa)) are cytoplasmic. 2 positions are modified to phosphothreonine: threonine 793 and threonine 801. The 288-residue stretch at 804–1091 (FDESFVVGRG…ERSEGEQEHL (288 aa)) folds into the Protein kinase domain. Residues 810 to 818 (VGRGACGTV) and lysine 832 each bind ATP. Phosphotyrosine occurs at positions 882 and 919. The active-site Proton acceptor is the aspartate 932. Residue serine 966 is modified to Phosphoserine. 2 positions are modified to phosphotyrosine: tyrosine 974 and tyrosine 981. A Phosphothreonine modification is found at threonine 982.

This sequence belongs to the protein kinase superfamily. Ser/Thr protein kinase family.

The protein localises to the cell membrane. It catalyses the reaction L-seryl-[protein] + ATP = O-phospho-L-seryl-[protein] + ADP + H(+). The catalysed reaction is L-threonyl-[protein] + ATP = O-phospho-L-threonyl-[protein] + ADP + H(+). This Arabidopsis thaliana (Mouse-ear cress) protein is Probable leucine-rich repeat receptor-like protein kinase At5g63930.